The following is a 310-amino-acid chain: MVKVYAPASSANMSVGFDVLGAAVTPVDGALLGDVVTVEAAETFSLNNLGRFADKLPSEPRENIVYQCWERFCQELGKQIPVAMTLEKNMPIGSGLGSSACSVVAALMAMNEHCGKPLNDTRLLALMGELEGRISGSIHYDNVAPCFLGGMQLMIEENDIISQQVPGFDEWLWVLAYPGIKVSTAEARAILPAQYRRQDCIAHGRHLAGFIHACYSRQPELAANLMKDVIAEPYRERLLPGFRQARQAVAEIGAVASGISGSGPTLFALCDKPDTAQRVADWLGKNYLQNQEGFVHICRLDTAGARVLEN.

ATP is bound at residue 91–101; that stretch reads PIGSGLGSSAC.

It belongs to the GHMP kinase family. Homoserine kinase subfamily.

It is found in the cytoplasm. It catalyses the reaction L-homoserine + ATP = O-phospho-L-homoserine + ADP + H(+). It participates in amino-acid biosynthesis; L-threonine biosynthesis; L-threonine from L-aspartate: step 4/5. Catalyzes the ATP-dependent phosphorylation of L-homoserine to L-homoserine phosphate. This is Homoserine kinase from Escherichia coli O6:H1 (strain CFT073 / ATCC 700928 / UPEC).